The sequence spans 235 residues: 2-C-methyl-D-erythritol 4-phosphate cytidylyltransferase (235 aa).

The protein belongs to the IspD/TarI cytidylyltransferase family. IspD subfamily.

The enzyme catalyses 2-C-methyl-D-erythritol 4-phosphate + CTP + H(+) = 4-CDP-2-C-methyl-D-erythritol + diphosphate. Its pathway is isoprenoid biosynthesis; isopentenyl diphosphate biosynthesis via DXP pathway; isopentenyl diphosphate from 1-deoxy-D-xylulose 5-phosphate: step 2/6. In terms of biological role, catalyzes the formation of 4-diphosphocytidyl-2-C-methyl-D-erythritol from CTP and 2-C-methyl-D-erythritol 4-phosphate (MEP). The sequence is that of 2-C-methyl-D-erythritol 4-phosphate cytidylyltransferase from Pseudomonas fluorescens (strain ATCC BAA-477 / NRRL B-23932 / Pf-5).